The chain runs to 774 residues: Alpha,alpha-trehalose phosphorylase (774 aa).

369–370 (WD) is a substrate binding site. Residue Glu-498 is the Proton donor of the active site. 610–611 (KQ) contacts substrate.

It belongs to the glycosyl hydrolase 65 family. In terms of assembly, homodimer.

It carries out the reaction alpha,alpha-trehalose + phosphate = beta-D-glucose 1-phosphate + D-glucose. The protein operates within glycan degradation; trehalose degradation. With respect to regulation, inhibited by Cu(2+), Hg(2+), Mg(2+), Mn(2+), Pb(2+) and Zn(2+). Catalyzes the reversible phosphorolytic cleavage of trehalose. Phosphorolysis is specific for trehalose, but D-xylose, D-galactose, L-arabinose, D-fucose, L-fucose, D-glucosamine and 2-deoxy D-glucose can act as substitutes for D-glucose in the synthetic reaction. The polypeptide is Alpha,alpha-trehalose phosphorylase (treP) (Thermoanaerobacter brockii (Thermoanaerobium brockii)).